A 310-amino-acid polypeptide reads, in one-letter code: Probable cell division protein WhiA (310 aa).

Residues 277 to 310 constitute a DNA-binding region (H-T-H motif); sequence SLKELAEQVPDGPISKSGVNHRLKKLHEIAENLR.

This sequence belongs to the WhiA family.

In terms of biological role, involved in cell division and chromosome segregation. The sequence is that of Probable cell division protein WhiA from Lactobacillus delbrueckii subsp. bulgaricus (strain ATCC BAA-365 / Lb-18).